The following is a 120-amino-acid chain: U-scoloptoxin(20)-Cw1a (120 aa).

The N-terminal stretch at 1–26 (MNSTDRLLGVLLAVVALILLIRISEA) is a signal peptide. The segment at 87–106 (SSGKSLTTTKDSSESRKKEI) is disordered. The span at 97 to 106 (DSSESRKKEI) shows a compositional bias: basic and acidic residues.

This sequence belongs to the scoloptoxin-20 family. Contains 3 disulfide bonds. Expressed by the venom gland.

Its subcellular location is the secreted. The protein is U-scoloptoxin(20)-Cw1a of Cormocephalus westwoodi (Westwood's green centipede).